The chain runs to 150 residues: Large ribosomal subunit protein bL9 (150 aa).

The protein belongs to the bacterial ribosomal protein bL9 family.

Its function is as follows. Binds to the 23S rRNA. This chain is Large ribosomal subunit protein bL9, found in Baumannia cicadellinicola subsp. Homalodisca coagulata.